The chain runs to 106 residues: Urease subunit beta (106 aa).

Belongs to the urease beta subunit family. Heterotrimer of UreA (gamma), UreB (beta) and UreC (alpha) subunits. Three heterotrimers associate to form the active enzyme. The apoenzyme interacts with an accessory complex composed of UreD, UreF and UreG, which is required for the assembly of the nickel containing metallocenter of UreC. The UreE protein may also play a direct role as a metallochaperone in nickel transfer to the urease apoprotein.

Its subcellular location is the cytoplasm. It carries out the reaction urea + 2 H2O + H(+) = hydrogencarbonate + 2 NH4(+). Its pathway is nitrogen metabolism; urea degradation; CO(2) and NH(3) from urea (urease route): step 1/1. The apoenzyme can be activated in vitro in the presence of nickel ions and carbon dioxide, which promotes carboxylation of 'Lys-217' of the UreC (alpha) subunit. The polypeptide is Urease subunit beta (Klebsiella aerogenes (Enterobacter aerogenes)).